Here is a 170-residue protein sequence, read N- to C-terminus: Peptidyl-prolyl cis-trans isomerase ESS1 (170 aa).

The region spanning 9–43 (TGLPTPWTVRYSKSKKREYFFNPETKHSQWEEPEG) is the WW domain. A disordered region spans residues 30–53 (NPETKHSQWEEPEGTNKDQLHKHL). Positions 32–53 (ETKHSQWEEPEGTNKDQLHKHL) are enriched in basic and acidic residues. Residues 57-170 (PVRVRCLHIL…SGVHVIKRVG (114 aa)) form the PpiC domain. Ser161 bears the Phosphoserine mark.

Belongs to the PpiC/parvulin rotamase family. Interacts with the RNA polymerase II largest subunit (RPB1) and with the SIN1-RDP3 HDAC subunit SIN3.

The protein localises to the cytoplasm. It is found in the nucleus. The catalysed reaction is [protein]-peptidylproline (omega=180) = [protein]-peptidylproline (omega=0). Its activity is regulated as follows. Inhibited by 5-hydroxy-1,4-naphthoquinone (juglone), but not by FK506 or cyclosporin A. Its function is as follows. Essential PPIase specific for phosphoserine and phosphothreonine N-terminal to the proline residue. Required for efficient pre-mRNA 3'-end processing and transcription termination, probably by inducing conformational changes by proline-directed isomerization in the C-terminal domain (CTD) of RPB1, thereby altering cofactor binding with the RNA polymerase II transcription complex. Also targets the SIN3-RPD3 histone deacetylase complex (HDAC). The protein is Peptidyl-prolyl cis-trans isomerase ESS1 (ESS1) of Saccharomyces cerevisiae (strain ATCC 204508 / S288c) (Baker's yeast).